The following is a 580-amino-acid chain: Cytochrome P450 monooxygenase helB1 (580 aa).

Residues 1–32 (MRTYAIRPVSNRLPGPIEPKKHRRDRDNSTTG) form a disordered region. N-linked (GlcNAc...) asparagine glycosylation is present at Asn-28. The helical transmembrane segment at 61–81 (FLNTISVLQVLAAIFIGALTY) threads the bilayer. Cys-497 contacts heme.

This sequence belongs to the cytochrome P450 family. The cofactor is heme.

It localises to the membrane. It participates in mycotoxin biosynthesis. Functionally, cytochrome P450 monooxygenase; part of the gene cluster that mediates the biosynthesis of helvolic acid, an antibacterial nortriterpenoid. Protostadienol synthase helA cyclizes (3S)-oxidosqualene to (17Z)-protosta-17(20),24-dien-3-beta-ol (protostadienol). The synthesis of protostadienol is followed by several steps of monooxygenation, dehydrogenation, and acyl transfer to yield the final helvolic acid. Following the cyclization to the tetracyclic protostadienol by helA, cytochrome P450 monooxygenases helB1-mediated and helB2-mediated oxidation at C-4 and C-16, acyltransferase helD2-dependent acetylation of 16-OH, oxidation of C-21 by cytochrome P450 monooxygenase helB4, and short chain dehydrogenase helC-dependent oxidative decarboxylation yield the fusidane skeleton. This intermediate is further modified in three additional steps mediated by the cytochrome P450 monooxygenase helB3, the acyltransferase helD1, and the 3-ketosteroid 1-dehydrogenase helE to give helvolic acid. Compared with the late stages in the biosynthesis of helvolic acid, enzymes involved in the early stage modifications act in a relatively strict order. The hydroxylation of C-16 by helB1 and subsequent acetylation by helD2 should occur before the helB3-mediated oxidation of C-21. C-4 demethylation in fusidane-type antibiotics proceeds in an unusual manner though it is also achieved by oxidative decarboxylation. The methyl group at C-4 beta position is oxidized by helB1 and subsequently removed by the short chain dehydrogenase helC. This is Cytochrome P450 monooxygenase helB1 from Aspergillus fumigatus (strain ATCC MYA-4609 / CBS 101355 / FGSC A1100 / Af293) (Neosartorya fumigata).